A 205-amino-acid chain; its full sequence is Putative 3-methyladenine DNA glycosylase (205 aa).

Belongs to the DNA glycosylase MPG family.

In Bacillus cereus (strain G9842), this protein is Putative 3-methyladenine DNA glycosylase.